The following is a 248-amino-acid chain: ATP synthase subunit a (248 aa).

6 consecutive transmembrane segments (helical) span residues 25–45, 83–103, 113–133, 142–162, 192–212, and 215–235; these read IAFTNSSAYMFAAVAIIAVMM, FFPLVFSLFMFIAVSNLVGII, LIVTVTLAMLVFVTVLVYGLA, LFVPSGVPIYILPLVVFIEVI, FIAMLGALGVVGWVGAVLPLG, and IALTALELLVAFLQAYVFAIL.

This sequence belongs to the ATPase A chain family. F-type ATPases have 2 components, CF(1) - the catalytic core - and CF(0) - the membrane proton channel. CF(1) has five subunits: alpha(3), beta(3), gamma(1), delta(1), epsilon(1). CF(0) has four main subunits: a, b, b' and c.

Its subcellular location is the cell inner membrane. Its function is as follows. Key component of the proton channel; it plays a direct role in the translocation of protons across the membrane. The polypeptide is ATP synthase subunit a (Rhodopseudomonas palustris (strain HaA2)).